Reading from the N-terminus, the 506-residue chain is Trans-cinnamate 4-monooxygenase (506 aa).

The chain crosses the membrane as a helical span at residues 3–23; sequence DFVLLEKALLGLFIATIVAIT. (E)-cinnamate contacts are provided by residues 214–219 and Ala307; that span reads RSRLAQ. Cys448 provides a ligand contact to heme.

The protein belongs to the cytochrome P450 family. Heme is required as a cofactor.

It localises to the membrane. The catalysed reaction is (E)-cinnamate + reduced [NADPH--hemoprotein reductase] + O2 = (E)-4-coumarate + oxidized [NADPH--hemoprotein reductase] + H2O + H(+). It participates in phenylpropanoid metabolism; trans-4-coumarate biosynthesis; trans-4-coumarate from trans-cinnamate: step 1/1. In terms of biological role, catalyzes the first oxidative step of the phenylpropanoid pathway in higher plants by transforming trans-cinnamate into p-coumarate. The compounds formed by this pathway are essential components for lignification, pollination, and defense against ultraviolet light, predators and pathogens. This is Trans-cinnamate 4-monooxygenase (CYP73A10) from Petroselinum crispum (Parsley).